Here is a 175-residue protein sequence, read N- to C-terminus: Two-on-two hemoglobin-3 (175 aa).

Positions 85 and 98 each coordinate heme. The disordered stretch occupies residues 153–175 (QNEKPKHKPQCACKHAANKPAEE).

The protein belongs to the truncated hemoglobin family. Group II subfamily. In terms of assembly, homodimer when ferric. Interacts with RGLG3 and RGLG4. Heme serves as cofactor. Expressed ubiquitously, with higher levels in root tissue than in shoot tissue.

Its function is as follows. Hemoglobin-like protein that exhibits an unusual concentration-independent binding of O(2) and CO. May promote shoot organogenesis from root explants in vitro. Inhibits RGLG3 and RGLG4 ubiquitination activity. The sequence is that of Two-on-two hemoglobin-3 (GLB3) from Arabidopsis thaliana (Mouse-ear cress).